Reading from the N-terminus, the 576-residue chain is RING finger and SPRY domain-containing protein 1 (576 aa).

The first 16 residues, 1–16, serve as a signal peptide directing secretion; sequence MIVFGWAVFLASRSLG. Residue Ser50 is modified to Phosphoserine. The disordered stretch occupies residues 50–99; the sequence is SGTDDSVDTQQQQAENSAVPTADTRSQPRDPVRPPRRGRGPHEPRRKKQN. Positions 57-68 are enriched in polar residues; sequence DTQQQQAENSAV. A compositionally biased stretch (basic residues) spans 83-97; it reads PPRRGRGPHEPRRKK. One can recognise a B30.2/SPRY domain in the interval 300–483; that stretch reads LFLKEGRQLT…CEFNFGAKPF (184 aa). Residue Asn314 is glycosylated (N-linked (GlcNAc...) asparagine). The RING-type zinc finger occupies 527–562; it reads CSLCCDEVADTQLKPCGHSDLCMDCALQLETCPLCR.

It localises to the secreted. The protein is RING finger and SPRY domain-containing protein 1 (RSPRY1) of Pongo abelii (Sumatran orangutan).